Reading from the N-terminus, the 289-residue chain is Pantothenate synthetase (289 aa).

33–40 (MGYLHEGH) is a binding site for ATP. Catalysis depends on histidine 40, which acts as the Proton donor. Residue glutamine 70 participates in (R)-pantoate binding. Beta-alanine is bound at residue glutamine 70. 157–160 (GEKD) is an ATP binding site. Glutamine 163 lines the (R)-pantoate pocket. Residues valine 186 and 194 to 197 (LSSR) contribute to the ATP site.

The protein belongs to the pantothenate synthetase family. As to quaternary structure, homodimer.

Its subcellular location is the cytoplasm. The enzyme catalyses (R)-pantoate + beta-alanine + ATP = (R)-pantothenate + AMP + diphosphate + H(+). The protein operates within cofactor biosynthesis; (R)-pantothenate biosynthesis; (R)-pantothenate from (R)-pantoate and beta-alanine: step 1/1. Its function is as follows. Catalyzes the condensation of pantoate with beta-alanine in an ATP-dependent reaction via a pantoyl-adenylate intermediate. The chain is Pantothenate synthetase from Anaeromyxobacter dehalogenans (strain 2CP-C).